The primary structure comprises 421 residues: UDP-N-acetylglucosamine 1-carboxyvinyltransferase (421 aa).

Phosphoenolpyruvate is bound at residue 22–23 (KN). R93 contributes to the UDP-N-acetyl-alpha-D-glucosamine binding site. C117 serves as the catalytic Proton donor. At C117 the chain carries 2-(S-cysteinyl)pyruvic acid O-phosphothioketal. Residues 122-126 (RPVDL), D308, and I330 contribute to the UDP-N-acetyl-alpha-D-glucosamine site.

This sequence belongs to the EPSP synthase family. MurA subfamily.

The protein localises to the cytoplasm. The enzyme catalyses phosphoenolpyruvate + UDP-N-acetyl-alpha-D-glucosamine = UDP-N-acetyl-3-O-(1-carboxyvinyl)-alpha-D-glucosamine + phosphate. It functions in the pathway cell wall biogenesis; peptidoglycan biosynthesis. In terms of biological role, cell wall formation. Adds enolpyruvyl to UDP-N-acetylglucosamine. The polypeptide is UDP-N-acetylglucosamine 1-carboxyvinyltransferase (Pseudomonas syringae pv. tomato (strain ATCC BAA-871 / DC3000)).